A 379-amino-acid polypeptide reads, in one-letter code: Alcohol dehydrogenase 1 (379 aa).

8 residues coordinate Zn(2+): cysteine 47, threonine 49, histidine 69, cysteine 99, cysteine 102, cysteine 105, cysteine 113, and cysteine 177. Residues threonine 49 and histidine 69 each coordinate an alcohol. Threonine 49 serves as a coordination point for NAD(+). Residues 202 to 207, aspartate 226, arginine 231, threonine 272, valine 295, 295 to 297, phenylalanine 322, and arginine 372 contribute to the NAD(+) site; these read GLGAVG and VGV.

It belongs to the zinc-containing alcohol dehydrogenase family. Homodimer. The cofactor is Zn(2+).

The protein localises to the cytoplasm. The enzyme catalyses a primary alcohol + NAD(+) = an aldehyde + NADH + H(+). It catalyses the reaction a secondary alcohol + NAD(+) = a ketone + NADH + H(+). The polypeptide is Alcohol dehydrogenase 1 (ADH1) (Zea mays (Maize)).